The sequence spans 342 residues: Transmembrane protein 268 (342 aa).

The next 2 helical transmembrane spans lie at 106 to 126 (AFAV…SQMF) and 133 to 153 (AGVL…VLVF). Residues 245–267 (VEGPEDLEDAPLLPSTPGPQERP) are disordered.

Interacts with ITGAM; this interaction inhibits ITGAM degradation via the endosome-lysosome pathway. Interacts with ITGB4; this interaction prevents ITGB4 degradation.

Its subcellular location is the cell membrane. In terms of biological role, stabilizes cell surface expression of ITGAM and participates in the adhesion and migration of phagocytes during bacterial clearance. This chain is Transmembrane protein 268, found in Mus musculus (Mouse).